A 420-amino-acid polypeptide reads, in one-letter code: Pyruvate dehydrogenase E1 component subunit alpha, mitochondrial (420 aa).

The transit peptide at 1–33 (MLAASFKRQPSQLVRGLGAVLRTPTRIGHVRTM) directs the protein to the mitochondrion. Pyruvate is bound by residues His-112, Tyr-138, Arg-139, Ala-177, Gly-185, Val-187, Asp-216, Gly-217, Ala-218, Asn-245, and Tyr-247. Tyr-138 and Arg-139 together coordinate thiamine diphosphate. Residues Gly-185, Val-187, Asp-216, Gly-217, Ala-218, and Asn-245 each contribute to the thiamine diphosphate site. Mg(2+) is bound at residue Asp-216. Positions 245 and 247 each coordinate Mg(2+). His-312 serves as a coordination point for thiamine diphosphate. Ser-313 carries the phosphoserine; by PDK1 and PDK2 modification.

Pyruvate dehydrogenase (E1) is a tetramer of 2 alpha and 2 beta subunits. Eukaryotic pyruvate dehydrogenase (PDH) complexes are organized as a core consisting of the oligomeric dihydrolipoamide acetyl-transferase (E2), around which are arranged multiple copies of pyruvate dehydrogenase (E1), dihydrolipoamide dehydrogenase (E3) and protein X (E3BP) bound by non-covalent bonds. The cofactor is thiamine diphosphate. Mg(2+) is required as a cofactor. Post-translationally, phosphorylated at Ser-313 by pyruvate dehydrogenase kinases PKP1 (PDK1) and PKP2 (PDK2), and dephosphorylated by pyruvate dehydrogenase phosphatases PTC5 and PTC6.

The protein localises to the mitochondrion matrix. It catalyses the reaction N(6)-[(R)-lipoyl]-L-lysyl-[protein] + pyruvate + H(+) = N(6)-[(R)-S(8)-acetyldihydrolipoyl]-L-lysyl-[protein] + CO2. E1 activity is regulated by phosphorylation (inactivation) and dephosphorylation (activation) of the alpha subunit. Its function is as follows. The pyruvate dehydrogenase complex catalyzes the overall conversion of pyruvate to acetyl-CoA and CO(2). The chain is Pyruvate dehydrogenase E1 component subunit alpha, mitochondrial (PDA1) from Saccharomyces cerevisiae (strain ATCC 204508 / S288c) (Baker's yeast).